We begin with the raw amino-acid sequence, 370 residues long: 4-hydroxy-3-methylbut-2-en-1-yl diphosphate synthase (flavodoxin) (370 aa).

Residues Cys270, Cys273, Cys305, and Glu312 each coordinate [4Fe-4S] cluster.

It belongs to the IspG family. Requires [4Fe-4S] cluster as cofactor.

The enzyme catalyses (2E)-4-hydroxy-3-methylbut-2-enyl diphosphate + oxidized [flavodoxin] + H2O + 2 H(+) = 2-C-methyl-D-erythritol 2,4-cyclic diphosphate + reduced [flavodoxin]. The protein operates within isoprenoid biosynthesis; isopentenyl diphosphate biosynthesis via DXP pathway; isopentenyl diphosphate from 1-deoxy-D-xylulose 5-phosphate: step 5/6. Its function is as follows. Converts 2C-methyl-D-erythritol 2,4-cyclodiphosphate (ME-2,4cPP) into 1-hydroxy-2-methyl-2-(E)-butenyl 4-diphosphate. The chain is 4-hydroxy-3-methylbut-2-en-1-yl diphosphate synthase (flavodoxin) from Ectopseudomonas mendocina (strain ymp) (Pseudomonas mendocina).